We begin with the raw amino-acid sequence, 529 residues long: Bifunctional purine biosynthesis protein PurH (529 aa).

An MGS-like domain is found at 1 to 148 (MQQRRPVRRA…KNHKDVAIVV (148 aa)).

This sequence belongs to the PurH family.

It catalyses the reaction (6R)-10-formyltetrahydrofolate + 5-amino-1-(5-phospho-beta-D-ribosyl)imidazole-4-carboxamide = 5-formamido-1-(5-phospho-D-ribosyl)imidazole-4-carboxamide + (6S)-5,6,7,8-tetrahydrofolate. The enzyme catalyses IMP + H2O = 5-formamido-1-(5-phospho-D-ribosyl)imidazole-4-carboxamide. It functions in the pathway purine metabolism; IMP biosynthesis via de novo pathway; 5-formamido-1-(5-phospho-D-ribosyl)imidazole-4-carboxamide from 5-amino-1-(5-phospho-D-ribosyl)imidazole-4-carboxamide (10-formyl THF route): step 1/1. The protein operates within purine metabolism; IMP biosynthesis via de novo pathway; IMP from 5-formamido-1-(5-phospho-D-ribosyl)imidazole-4-carboxamide: step 1/1. The protein is Bifunctional purine biosynthesis protein PurH of Klebsiella pneumoniae (strain 342).